The following is a 245-amino-acid chain: 8-amino-3,8-dideoxy-manno-octulosonate cytidylyltransferase (245 aa).

Belongs to the KdsB family.

It localises to the cytoplasm. It catalyses the reaction 8-amino-3,8-dideoxy-alpha-D-manno-octulosonate + CTP = CMP-8-amino-3,8-dideoxy-alpha-D-manno-oct-2-ulosonate + diphosphate. It functions in the pathway bacterial outer membrane biogenesis; lipopolysaccharide biosynthesis. Activates KDO8N (a required 8-carbon sugar) for incorporation into bacterial lipopolysaccharide in the Shewanella genus. The chain is 8-amino-3,8-dideoxy-manno-octulosonate cytidylyltransferase from Shewanella sp. (strain W3-18-1).